The following is a 380-amino-acid chain: 1-deoxy-D-xylulose 5-phosphate reductoisomerase (380 aa).

8 residues coordinate NADPH: Ser-10, Gly-11, Ser-12, Ile-13, Gly-36, Lys-37, Asn-38, and Asn-120. Residue Lys-121 participates in 1-deoxy-D-xylulose 5-phosphate binding. Glu-122 serves as a coordination point for NADPH. A Mn(2+)-binding site is contributed by Asp-146. Residues Ser-147, Glu-148, Ser-172, and His-195 each coordinate 1-deoxy-D-xylulose 5-phosphate. Glu-148 provides a ligand contact to Mn(2+). Residue Gly-201 participates in NADPH binding. The 1-deoxy-D-xylulose 5-phosphate site is built by Ser-208, Asn-213, Lys-214, and Glu-217. Position 217 (Glu-217) interacts with Mn(2+).

It belongs to the DXR family. The cofactor is Mg(2+). Mn(2+) is required as a cofactor.

The enzyme catalyses 2-C-methyl-D-erythritol 4-phosphate + NADP(+) = 1-deoxy-D-xylulose 5-phosphate + NADPH + H(+). It functions in the pathway isoprenoid biosynthesis; isopentenyl diphosphate biosynthesis via DXP pathway; isopentenyl diphosphate from 1-deoxy-D-xylulose 5-phosphate: step 1/6. Its function is as follows. Catalyzes the NADPH-dependent rearrangement and reduction of 1-deoxy-D-xylulose-5-phosphate (DXP) to 2-C-methyl-D-erythritol 4-phosphate (MEP). This Bacillus cereus (strain ATCC 10987 / NRS 248) protein is 1-deoxy-D-xylulose 5-phosphate reductoisomerase.